The primary structure comprises 80 residues: Conotoxin Lt6.2 (80 aa).

Positions 1 to 24 (MKLTRVLIIAVLFLTAYQLTTVET) are cleaved as a signal peptide. Positions 25–47 (YSRGKWMHRALRSTGKNPKVTRE) are excised as a propeptide. 3 cysteine pairs are disulfide-bonded: C48–C62, C55–C66, and C61–C73.

It belongs to the conotoxin O1 superfamily. As to expression, expressed by the venom duct.

It is found in the secreted. This chain is Conotoxin Lt6.2, found in Conus litteratus (Lettered cone).